We begin with the raw amino-acid sequence, 141 residues long: HTH-type transcriptional repressor NsrR (141 aa).

Residues 2–129 (QLTSFTDYGL…DSHTLADMVE (128 aa)) enclose the HTH rrf2-type domain. The H-T-H motif DNA-binding region spans 28-51 (ISEVTEVYGVSRNHMVKIINQLSR). [2Fe-2S] cluster contacts are provided by cysteine 91, cysteine 96, and cysteine 102.

[2Fe-2S] cluster serves as cofactor.

In terms of biological role, nitric oxide-sensitive repressor of genes involved in protecting the cell against nitrosative stress. May require iron for activity. This Serratia proteamaculans (strain 568) protein is HTH-type transcriptional repressor NsrR.